The primary structure comprises 509 residues: Cytochrome P450 monooxygenase FUP2 (509 aa).

Transmembrane regions (helical) follow at residues 16 to 36 and 224 to 244; these read FGLA…YGCF and MVEA…FGIA. Cysteine 450 lines the heme pocket.

This sequence belongs to the cytochrome P450 family. Requires heme as cofactor.

It localises to the membrane. Its pathway is secondary metabolite biosynthesis. Its function is as follows. Cytochrome P450 monooxygenase; part of the gene cluster that mediates the biosynthesis of the mycotoxin fusaproliferin (FUP) that belongs to the class of bicyclic sesterterpenoids. FUP2 introduces a hydroxyl group at the C-24 position resulting in the formation of preterpestacin IIa, which can be further oxidized. The oxidation of the hydroxyl group at C-24 to an aldehyde and further to a carboxylic group takes place via unspecific alcohol and aldehyde dehydrogenases and leads to the shunt products preterpestacin IIc and preterpestacin IIb, respectively. The FUP biosynthetic pathway starts with the enzyme encoded by FUP1 that combines a C-terminal prenyltransferase domain responsible for the synthesis of geranylgeranyl diphosphate with the N-terminal terpene cyclase domain, to yield preterpestacin I. Preterpestacin I is then decorated by oxygenation steps that are catalyzed by two cytochrome P450 monooxygenases. First, FUP2 introduces a hydroxyl group at the C-24 position resulting in the formation of preterpestacin IIa. The second P450 monooxygenase catalyzes the hydroxylation at C-16 and C-17 of preterpestacin IIa, producing preterpestacin III. Subsequently, the FAD-dependent oxidoreductase FUP4 catalyzes the oxidation of the hydroxy group at the C-16 position to a keto group, leading to the formation of (-)-terpestacin, which is the immediate precursor of FUP. The final step in the proposed biosynthetic pathway is the addition of an acetyl group at the C-24 position of terpestacin, which is catalyzed by the acetyltransferase FUP5. In Fusarium proliferatum (strain ET1) (Orchid endophyte fungus), this protein is Cytochrome P450 monooxygenase FUP2.